The primary structure comprises 88 residues: Small ribosomal subunit protein bS20 (88 aa).

The protein belongs to the bacterial ribosomal protein bS20 family.

Binds directly to 16S ribosomal RNA. In Rhodopseudomonas palustris (strain BisB18), this protein is Small ribosomal subunit protein bS20.